The primary structure comprises 340 residues: MTRDIVITEVALRDGSHAINHQFTVEQVVEVASALDEANVPYIEVSHGDGLAGSSLQYGLSRTPELELIEAAVSVCKQAKVGVLLLPGIGTIKDLKTAAALGVGMARIATHATEADVSAQHIYQAKELGLTTAGFLMMAHMAAPEKLAEQARLMQSYGADVVYIVDSAGALLPDQAGERVRALKQCLHVPVGFHAHNNLSLAMANTLVAIQEGATWIDGSVRCLGAGAGNTQTEVLLAVLDRMGIQTGVDLYKMMDLAEDIVSPILQVPQEITRDALVLGYAGVYSSFRLHAERAARKFGIDSRDILIELGRRKVVGGQEDMIVDVAAEIAQRYSSTKIR.

The region spanning 5-255 is the Pyruvate carboxyltransferase domain; sequence IVITEVALRD…QTGVDLYKMM (251 aa). 13 to 14 is a substrate binding site; sequence RD. Mn(2+) is bound at residue Asp14. His17 functions as the Proton acceptor in the catalytic mechanism. Ser167 and His194 together coordinate substrate. His194 and His196 together coordinate Mn(2+). Residue Tyr285 coordinates substrate.

The protein belongs to the 4-hydroxy-2-oxovalerate aldolase family.

It carries out the reaction (S)-4-hydroxy-2-oxopentanoate = acetaldehyde + pyruvate. The protein is 4-hydroxy-2-oxovalerate aldolase of Brevibacillus brevis (strain 47 / JCM 6285 / NBRC 100599).